The following is a 9439-amino-acid chain: Extracellular matrix-binding protein ebh (9439 aa).

30 consecutive FIVAR domains span residues 1815–1871 (ARRR…VNSA), 1901–1957 (AKEQ…INDA), 1985–2041 (AYDT…VRDA), 2071–2127 (AKKR…ITSE), 2155–2211 (AYNK…VTQA), 2241–2297 (AKNR…ISSE), 2325–2381 (AYNK…VEDA), 2411–2467 (AKEK…ITEN), 2488–2551 (DTTS…VNNA), 2581–2638 (ARNR…STEI), 2665–2720 (AKNQ…IRTN), 2748–2804 (AKTA…VSDE), 2832–2888 (AYNQ…VNNA), 2918–2974 (AKEQ…ISNA), 3002–3058 (AYNQ…VTAA), 3088–3144 (AKQQ…ITNE), 3172–3228 (AYNQ…VAQA), 3258–3314 (AKNQ…ISDE), 3335–3398 (DTTE…VNNA), 3428–3484 (ARLN…ITTE), 3512–3567 (AKTA…IKTN), 3595–3650 (IKRQ…VKES), 3678–3733 (AKNR…IRQN), 3802–3860 (SMTA…IDQK), 3928–3983 (AMTQ…LDPA), 4056–4114 (AMQA…VNQK), 4182–4240 (SMGT…VDNA), 4308–4365 (AMHT…INQK), 4433–4491 (VMEQ…IEQA), and 4559–4617 (SMQT…IDQT). Positions 2495–2507 (EVRKLSRRGDTNN) are enriched in basic and acidic residues. Positions 2495–2514 (EVRKLSRRGDTNNKKPSSVS) are disordered. Residues 2925 to 2938 (AVDQVPSTEGMTQQ) show a composition bias toward polar residues. A disordered region spans residues 2925–2951 (AVDQVPSTEGMTQQTKDDYNSKQQAAQ). Residues 4649–4674 (GYLNDPQKSGEESLVNGSNTRSEVEE) form a disordered region. FIVAR domains are found at residues 4685–4743 (AMKQ…IEQK), 4811–4869 (AMQA…IEQA), 4937–4995 (AMSN…IEQA), 5063–5115 (AMEA…VLDK), 5189–5246 (AMLG…INQL), 5314–5372 (LMGA…VTTA), 5440–5498 (AMGE…IDQA), 5566–5624 (AMKK…ITNA), 5692–5750 (AMKQ…IADT), 5818–5875 (DMST…LQDL), 5943–6000 (AMKA…IKQA), 6068–6126 (KMEE…INRT), 6194–6252 (AMQQ…IQAI), and 6320–6378 (EMGT…IADA). Residues 5699–5712 (QVNQDDQISNSSPF) show a composition bias toward polar residues. The disordered stretch occupies residues 5699 to 5719 (QVNQDDQISNSSPFINEDSDK). A disordered region spans residues 6413-6434 (NNSQRQSEHDEINSAPSRTEVS). FIVAR domains follow at residues 6446–6504 (AMRQ…IEDA), 6572–6630 (AMKA…INRA), 6698–6755 (SMNQ…IDQA), 6823–6877 (TMKA…ANDE), 6949–7007 (AMKK…INTI), 7075–7133 (SMNT…VERA), 7201–7259 (DMKK…IENA), 7327–7384 (AMKH…IKQL), 7452–7510 (AMEN…IEHA), 7578–7636 (AMKA…INSI), 7704–7762 (AMET…VDIV), 7830–7888 (AMKS…VRQA), 7956–8010 (VMGK…TKQA), 8078–8137 (IMGE…IDTF), 8205–8264 (AMKS…IQGL), 8332–8391 (AMKD…VLGL), 8459–8518 (KMKL…IQHL), and 8587–8643 (AMQG…ANII). A helical membrane pass occupies residues 9306–9324 (TVGVITLTGLLSSFWLVLA). Composition is skewed to basic and acidic residues over residues 9363–9375 (DKEEQIQNDDKHS), 9386–9395 (EKQLSEEDIH), and 9404–9413 (QNSDNKDTKQ). Residues 9363-9439 (DKEEQIQNDD…VVKTKKRSKK (77 aa)) form a disordered region. Over residues 9414–9439 (KKVTSKKKKTPQSTKKVVKTKKRSKK) the composition is skewed to basic residues.

The protein resides in the cell membrane. This is Extracellular matrix-binding protein ebh (ebh) from Staphylococcus epidermidis (strain ATCC 12228 / FDA PCI 1200).